Here is a 427-residue protein sequence, read N- to C-terminus: Pseudouridylate synthase 1 homolog (427 aa).

A disordered region spans residues 20–83 (GPRPSCSPRM…DEERREKPPK (64 aa)). Over residues 44-79 (QDRRSCSGRAGGDRVWEDGEHPAKKLKSGGDEERRE) the composition is skewed to basic and acidic residues. The active-site Nucleophile is the Asp146. Positions 407-427 (GGTGAKVPSPLEGSEGDGDTD) are disordered. 2 positions are modified to phosphoserine: Ser415 and Ser420. Thr426 is subject to Phosphothreonine.

Belongs to the tRNA pseudouridine synthase TruA family. Monomer. Forms a complex with RARG and the SRA1 RNA in the nucleus. In terms of tissue distribution, widely expressed. High levels of expression found in brain and skeletal muscle.

It is found in the mitochondrion. The protein localises to the nucleus. It localises to the cytoplasm. It carries out the reaction a uridine in tRNA = a pseudouridine in tRNA. It catalyses the reaction uridine(38/39/40) in tRNA = pseudouridine(38/39/40) in tRNA. The enzyme catalyses a uridine in mRNA = a pseudouridine in mRNA. Pseudouridylate synthase that catalyzes pseudouridylation of tRNAs and mRNAs. Acts on positions 27/28 in the anticodon stem and also positions 34 and 36 in the anticodon of an intron containing tRNA. Also catalyzes pseudouridylation of mRNAs: mediates pseudouridylation of mRNAs with the consensus sequence 5'-UGUAG-3'. Acts as a regulator of pre-mRNA splicing by mediating pseudouridylation of pre-mRNAs at locations associated with alternatively spliced regions. Pseudouridylation of pre-mRNAs near splice sites directly regulates mRNA splicing and mRNA 3'-end processing. Involved in regulation of nuclear receptor activity through pseudouridylation of SRA1 mRNA. This Homo sapiens (Human) protein is Pseudouridylate synthase 1 homolog.